Here is a 255-residue protein sequence, read N- to C-terminus: 1-(5-phosphoribosyl)-5-[(5-phosphoribosylamino)methylideneamino] imidazole-4-carboxamide isomerase (255 aa).

The active-site Proton acceptor is the Asp8. Asp129 functions as the Proton donor in the catalytic mechanism.

The protein belongs to the HisA/HisF family.

Its subcellular location is the cytoplasm. The catalysed reaction is 1-(5-phospho-beta-D-ribosyl)-5-[(5-phospho-beta-D-ribosylamino)methylideneamino]imidazole-4-carboxamide = 5-[(5-phospho-1-deoxy-D-ribulos-1-ylimino)methylamino]-1-(5-phospho-beta-D-ribosyl)imidazole-4-carboxamide. The protein operates within amino-acid biosynthesis; L-histidine biosynthesis; L-histidine from 5-phospho-alpha-D-ribose 1-diphosphate: step 4/9. In Synechococcus sp. (strain CC9902), this protein is 1-(5-phosphoribosyl)-5-[(5-phosphoribosylamino)methylideneamino] imidazole-4-carboxamide isomerase.